The chain runs to 810 residues: Phospholipase D alpha 1 (810 aa).

The propeptide occupies 1-36 (MAQHLLHGTLHATIYEVDDLHTGGLRSGFFGKILAN). The 126-residue stretch at 1 to 126 (MAQHLLHGTL…IHGEEVDQWV (126 aa)) folds into the C2 domain. Asp-187 contacts Ca(2+). In terms of domain architecture, PLD phosphodiesterase 1 spans 327 to 366 (AMFTHHQKIVVVDSEMPSRGGSQMRRIVSFVGGIDLCDGR). Active-site residues include His-332, Lys-334, and Asp-339. His-332 provides a ligand contact to a 1,2-diacyl-sn-glycero-3-phosphate. The Ca(2+) site is built by His-372 and His-406. A 1,2-diacyl-sn-glycero-3-phosphate-binding residues include Gln-522 and His-661. Positions 656–683 (FMIYVHTKMMIVDDEYIIIGSANINQRS) constitute a PLD phosphodiesterase 2 domain. Residues His-661, Lys-663, and Asp-668 contribute to the active site. Ca(2+) is bound at residue Glu-722.

Belongs to the phospholipase D family. C2-PLD subfamily. Requires Ca(2+) as cofactor.

It localises to the cytoplasm. It is found in the membrane. The enzyme catalyses a 1,2-diacyl-sn-glycero-3-phosphocholine + H2O = a 1,2-diacyl-sn-glycero-3-phosphate + choline + H(+). Functionally, hydrolyzes glycerol-phospholipids at the terminal phosphodiesteric bond. Plays an important role in various cellular processes, including phytohormone action, vesicular trafficking, secretion, cytoskeletal arrangement, meiosis, tumor promotion, pathogenesis, membrane deterioration and senescence. This chain is Phospholipase D alpha 1 (PLD1), found in Brassica oleracea var. capitata (Cabbage).